The chain runs to 389 residues: Phospho-N-acetylmuramoyl-pentapeptide-transferase (389 aa).

A run of 10 helical transmembrane segments spans residues 25 to 45 (RAVM…PWVI), 73 to 93 (TMGG…WGDL), 97 to 117 (FIWI…VDDY), 135 to 155 (FWQS…VSEA), 190 to 210 (ISYP…IVGA), 222 to 242 (GLVI…AYVM), 258 to 278 (GAGE…AFLW), 286 to 306 (VFMG…VAVI), 311 to 331 (IVLF…MLQV), and 366 to 386 (QVVV…LSTL).

Belongs to the glycosyltransferase 4 family. MraY subfamily. The cofactor is Mg(2+).

It is found in the cell inner membrane. It carries out the reaction UDP-N-acetyl-alpha-D-muramoyl-L-alanyl-gamma-D-glutamyl-meso-2,6-diaminopimeloyl-D-alanyl-D-alanine + di-trans,octa-cis-undecaprenyl phosphate = di-trans,octa-cis-undecaprenyl diphospho-N-acetyl-alpha-D-muramoyl-L-alanyl-D-glutamyl-meso-2,6-diaminopimeloyl-D-alanyl-D-alanine + UMP. It functions in the pathway cell wall biogenesis; peptidoglycan biosynthesis. Catalyzes the initial step of the lipid cycle reactions in the biosynthesis of the cell wall peptidoglycan: transfers peptidoglycan precursor phospho-MurNAc-pentapeptide from UDP-MurNAc-pentapeptide onto the lipid carrier undecaprenyl phosphate, yielding undecaprenyl-pyrophosphoryl-MurNAc-pentapeptide, known as lipid I. The chain is Phospho-N-acetylmuramoyl-pentapeptide-transferase from Burkholderia pseudomallei (strain 1106a).